Reading from the N-terminus, the 211-residue chain is Chaperone protein TorD (211 aa).

The protein belongs to the TorD/DmsD family. TorD subfamily.

The protein localises to the cytoplasm. Functionally, involved in the biogenesis of TorA. Acts on TorA before the insertion of the molybdenum cofactor and, as a result, probably favors a conformation of the apoenzyme that is competent for acquiring the cofactor. This chain is Chaperone protein TorD, found in Shewanella loihica (strain ATCC BAA-1088 / PV-4).